Here is a 213-residue protein sequence, read N- to C-terminus: MRSGVIAQKVGMTRVYNDAGEHIPVTVLRLDNVQVVAQRTEDKNGYTAVQLGAGQSKVKNTTKALRGHFAAANVEPKAKLVEFRVSPENLIDIGATLTANHFQSGQLVDVTGTTIGKGFAGAMKRHNFGGGRASHGNSVSHRAHGSTGNNQDPGRVWKGKRMAGHMGQTRVTTQNLEVVSTDEDRGLILVKGAVPGSKGSWIIVRDAVKSAAK.

Positions 131–155 (GRASHGNSVSHRAHGSTGNNQDPGR) are disordered. Positions 135–152 (HGNSVSHRAHGSTGNNQD) are enriched in polar residues. Q151 is modified (N5-methylglutamine).

The protein belongs to the universal ribosomal protein uL3 family. In terms of assembly, part of the 50S ribosomal subunit. Forms a cluster with proteins L14 and L19. In terms of processing, methylated by PrmB.

In terms of biological role, one of the primary rRNA binding proteins, it binds directly near the 3'-end of the 23S rRNA, where it nucleates assembly of the 50S subunit. The sequence is that of Large ribosomal subunit protein uL3 from Agrobacterium fabrum (strain C58 / ATCC 33970) (Agrobacterium tumefaciens (strain C58)).